The chain runs to 439 residues: MAAMPKPSDSKTGGKATVLLGSQWGDEGKGKLADVLSGQMDVCARCAGGNNAGHTIVADVNGVKTKFDFHLLPSGLVNPRCAGFIGSGVVVHVPSFFAELDTIQKKGLNCDGRLFISDRAHLVFDFHQVVDGLKEVELGGSSIGTTKKGIGPAYSSKASRSGLRVHHLYDPELFATKFRKLVEGRFKRYGHFEYDTEGEIARYRAFAERLRPHIVDGVTFIHTALAQNRKVLVEGANALFLDIDFGTYPFVTSSSTSIGGVLTGLGIPPTAIGDVIGVMKAYTTRVGMGPFPTELHEEIGHHLQEVGAEYGVTTGRRRRCGWLDLVMMRYSCLINGYTSLNLTKLDVLDQLKEIKICVGYVVDGKELPSFPADLEVLAKVEVQYKTLPGWQQDISKTTTWEELPENCRNYVDFIEQFLGVKIEWIGVGPARESMIHRAG.

GTP contacts are provided by residues 25–31 (GDEGKGK) and 53–55 (GHT). D26 functions as the Proton acceptor in the catalytic mechanism. 2 residues coordinate Mg(2+): D26 and G53. IMP is bound by residues 26 to 29 (DEGK), 51 to 54 (NAGH), T146, R160, N237, T252, and R316. The active-site Proton donor is the H54. A substrate-binding site is contributed by 312–318 (VTTGRRR). Residues R318, 344–346 (KLD), and 426–428 (GVG) each bind GTP.

Belongs to the adenylosuccinate synthetase family. Homodimer. It depends on Mg(2+) as a cofactor.

The protein localises to the cytoplasm. The catalysed reaction is IMP + L-aspartate + GTP = N(6)-(1,2-dicarboxyethyl)-AMP + GDP + phosphate + 2 H(+). It functions in the pathway purine metabolism; AMP biosynthesis via de novo pathway; AMP from IMP: step 1/2. In terms of biological role, plays an important role in the de novo pathway and in the salvage pathway of purine nucleotide biosynthesis. Catalyzes the first committed step in the biosynthesis of AMP from IMP. In Mycosarcoma maydis (Corn smut fungus), this protein is Adenylosuccinate synthetase.